The following is a 520-amino-acid chain: Ribonuclease Y (520 aa).

The chain crosses the membrane as a helical span at residues 5 to 25 (ITIISSLLFLIVGLVVGSLIF). Residues 70–127 (RTEIENELRGRRTETQKAENRLLQREENLDRKDTSLSKREATLERKEESISKRQQQIE) are disordered. The KH domain maps to 210 to 273 (TVSVVTLPND…EIARIALEKL (64 aa)). The HD domain maps to 336 to 429 (VLNHSLEVSK…VAAADALSAA (94 aa)).

This sequence belongs to the RNase Y family.

The protein resides in the cell membrane. In terms of biological role, endoribonuclease that initiates mRNA decay. This is Ribonuclease Y from Listeria welshimeri serovar 6b (strain ATCC 35897 / DSM 20650 / CCUG 15529 / CIP 8149 / NCTC 11857 / SLCC 5334 / V8).